A 439-amino-acid chain; its full sequence is Ribosomal protein uS12 methylthiotransferase RimO (439 aa).

An MTTase N-terminal domain is found at 3–113; sequence HKVGFVSLGC…VVNAVHQHLP (111 aa). Residues Cys-12, Cys-48, Cys-77, Cys-144, Cys-148, and Cys-151 each contribute to the [4Fe-4S] cluster site. The Radical SAM core domain occupies 130 to 367; it reads LTPRHYAYLK…MQVQAEISRN (238 aa). The region spanning 370–436 is the TRAM domain; it reads KNKIGSTQTV…DYDLYGDLEY (67 aa).

It belongs to the methylthiotransferase family. RimO subfamily. It depends on [4Fe-4S] cluster as a cofactor.

It is found in the cytoplasm. It catalyses the reaction L-aspartate(89)-[ribosomal protein uS12]-hydrogen + (sulfur carrier)-SH + AH2 + 2 S-adenosyl-L-methionine = 3-methylsulfanyl-L-aspartate(89)-[ribosomal protein uS12]-hydrogen + (sulfur carrier)-H + 5'-deoxyadenosine + L-methionine + A + S-adenosyl-L-homocysteine + 2 H(+). In terms of biological role, catalyzes the methylthiolation of an aspartic acid residue of ribosomal protein uS12. This chain is Ribosomal protein uS12 methylthiotransferase RimO, found in Legionella pneumophila (strain Corby).